A 2767-amino-acid polypeptide reads, in one-letter code: Serine/threonine-protein kinase ATM (2767 aa).

The region spanning 1713 to 2317 is the FAT domain; that stretch reads NVVMASNHCQ…FYQLYPLVFA (605 aa). The PI3K/PI4K catalytic domain maps to 2419–2734; it reads WTNETTQCGG…KLDGREAGTM (316 aa). The interval 2425-2431 is G-loop; that stretch reads QCGGLNA. The catalytic loop stretch occupies residues 2601-2609; sequence GLGDRHTQN. The interval 2621–2645 is activation loop; the sequence is HIDFGIAFEQGKIQTTPETVPFRLT. The FATC domain maps to 2735-2767; sequence GDSNVEAQVERLINEATLPSNLCMLFPGWDPHL.

Belongs to the PI3/PI4-kinase family. ATM subfamily.

It is found in the nucleus. The protein resides in the chromosome. The protein localises to the telomere. The enzyme catalyses L-seryl-[protein] + ATP = O-phospho-L-seryl-[protein] + ADP + H(+). The catalysed reaction is L-threonyl-[protein] + ATP = O-phospho-L-threonyl-[protein] + ADP + H(+). Functionally, serine/threonine-protein kinase which recognizes the substrate consensus sequence [ST]-Q. Required to suppress spontaneous apoptosis of proliferating cells during development, and for their proper differentiation. Required for female fertility. Protects telomeres from fusion, maybe by recruiting or maintaining chromatin-modifying complexes such as Su(var)205/HP1. May activate checkpoint signaling in response to DNA double-stranded breaks induced by low-dose ionizing radiation. May phosphorylate histone H2AV. In Drosophila melanogaster (Fruit fly), this protein is Serine/threonine-protein kinase ATM (tefu).